We begin with the raw amino-acid sequence, 105 residues long: Cell division protein FtsB (105 aa).

Residues methionine 1–lysine 3 are Cytoplasmic-facing. A helical transmembrane segment spans residues leucine 4–leucine 21. Residues glycine 22 to glutamine 105 lie on the Periplasmic side of the membrane. Residues aspartate 28–glycine 62 are a coiled coil.

The protein belongs to the FtsB family. In terms of assembly, part of a complex composed of FtsB, FtsL and FtsQ.

Its subcellular location is the cell inner membrane. Essential cell division protein. May link together the upstream cell division proteins, which are predominantly cytoplasmic, with the downstream cell division proteins, which are predominantly periplasmic. The protein is Cell division protein FtsB of Sodalis glossinidius (strain morsitans).